Here is a 511-residue protein sequence, read N- to C-terminus: DELLA protein RGL1 (511 aa).

Basic and acidic residues predominate over residues 1 to 11 (MKREHNHRESS). The disordered stretch occupies residues 1 to 20 (MKREHNHRESSAGEGGSSSM). Residues 32–36 (DELLV) carry the DELLA motif motif. Positions 54 to 58 (LEQLE) match the LEXLE motif motif. The short motif at 73–77 (VHYNP) is the VHYNP motif element. In terms of domain architecture, GRAS spans 143–506 (LDSQETGVRL…RPLIATSAWR (364 aa)). The segment at 150–204 (VRLVHALLACAEAVQQNNLKLADALVKHVGLLASSQAGAMRKVATYFAEGLARRI) is leucine repeat I (LRI). Residues 157 to 161 (LACAE) carry the LxCxE motif motif. Residues 223-288 (QIHFYESCPY…NGPPDFRLTG (66 aa)) form a VHIID region. The short motif at 254-258 (VHVID) is the VHIID element. The segment at 298–330 (EVGWKLGQLASTIGVNFEFKSIALNNLSDLKPE) is leucine repeat II (LRII). A PFYRE region spans residues 341–427 (VAVNSVFELH…ELFLGRQILN (87 aa)). The LXXLL motif motif lies at 349–353 (LHRLL). Residues 430-506 (ACEGEDRVER…RPLIATSAWR (77 aa)) form an SAW region.

The protein belongs to the GRAS family. DELLA subfamily. As to quaternary structure, interacts directly with the GID2/SLY1 component of the SCF(GID2) complex. Interacts (via N-terminus) with GID1A, GID1B and GID1B (via N-terminus). Interacts with the BOI proteins BOI, BRG1, BRG2 and BRG3. Binds to and coactivates GAF1/IDD2 and ENY/IDD1. Phosphorylated. Post-translationally, may be ubiquitinated, as suggested by its interaction with GID2. Ubiquitination is however unsure since in contrast to other DELLA proteins, it is not ubiquitinated and degraded upon GA application. Nevertheless, ubiquitination may be triggered by other processes. As to expression, predominantly expressed in germinating seeds and flowers and siliques. Highly expressed in inflorescences and weakly or not expressed in rosette leaves, etiolated seedlings, siliques, mature stems and roots. RGA and GAI transcripts were detected at slightly varying levels in all tissues examined. RGL2 signal was undetected, and RGL3 signal was very weak in all tissues examined (rosette leaves, seedlings, inflorescences, and siliques) except inflorescences. In the flower, it is expressed in developing ovules as well as in developing anthers throughout microspore development.

It localises to the nucleus. Its function is as follows. Probable transcriptional regulator that acts as a repressor of the gibberellin (GA) signaling pathway. No effect of the BOI proteins on its stability. Probably acts by participating in large multiprotein complexes that repress transcription of GA-inducible genes. Has overlapping but distinct roles in GA signaling compared to RGA and GAI. Regulates the floral development. May also participate in seed germination and in ovule and anther development. Its activity is probably regulated by other phytohormones such as auxin and ethylene. This chain is DELLA protein RGL1 (RGL1), found in Arabidopsis thaliana (Mouse-ear cress).